A 187-amino-acid polypeptide reads, in one-letter code: Prepilin peptidase-dependent protein B (187 aa).

Positions methionine 1–glycine 7 are cleaved as a propeptide — leader sequence. Phenylalanine 8 carries the post-translational modification N-methylphenylalanine. A helical transmembrane segment spans residues phenylalanine 8–alanine 28.

The protein localises to the membrane. Functionally, not yet known. The polypeptide is Prepilin peptidase-dependent protein B (ppdB) (Escherichia coli (strain K12)).